Consider the following 394-residue polypeptide: Fatty acid resistance protein FarA (394 aa).

Positions 1-23 are disordered; sequence MKSGNSEPNLMETHTDETKLQNT. The helical transmembrane segment at 33–53 threads the bilayer; sequence ALTLLFALSAAAAGSAFFLWW. Positions 356–376 are disordered; it reads SAAGAPVSKTPGAALPEMEST.

Belongs to the membrane fusion protein (MFP) (TC 8.A.1) family. As to quaternary structure, probably part of a tripartite efflux system FarAB-MtrE, which is composed of an inner membrane transporter, FarB, a periplasmic membrane fusion protein, FarA, and an outer membrane component, MtrE.

It is found in the cell inner membrane. In terms of biological role, mediates resistance to long-chained antibacterial fatty acids (FAs). Function is dependent on the MtrE outer membrane protein. The sequence is that of Fatty acid resistance protein FarA from Neisseria gonorrhoeae.